Reading from the N-terminus, the 471-residue chain is Bifunctional protein GlmU (471 aa).

The interval 1-232 is pyrophosphorylase; sequence MSDITAVLLA…EEDALAPNDR (232 aa). UDP-N-acetyl-alpha-D-glucosamine contacts are provided by residues 9–12, Lys23, Gln73, 78–79, 102–104, Gly141, Glu157, and Asn230; these read LAAG, GT, and YGD. Asp104 contributes to the Mg(2+) binding site. Position 230 (Asn230) interacts with Mg(2+). The tract at residues 233–253 is linker; the sequence is VELARAEARLRRQINERHMRN. The segment at 254-471 is N-acetyltransferase; that stretch reads GVTIINPDAT…RQRKMNREGT (218 aa). Residues Arg335 and Lys353 each contribute to the UDP-N-acetyl-alpha-D-glucosamine site. The active-site Proton acceptor is His365. Tyr368 and Asn379 together coordinate UDP-N-acetyl-alpha-D-glucosamine. Acetyl-CoA contacts are provided by residues Ala382, 388-389, Ala425, and Arg444; that span reads NY.

It in the N-terminal section; belongs to the N-acetylglucosamine-1-phosphate uridyltransferase family. This sequence in the C-terminal section; belongs to the transferase hexapeptide repeat family. In terms of assembly, homotrimer. Mg(2+) is required as a cofactor.

It is found in the cytoplasm. It carries out the reaction alpha-D-glucosamine 1-phosphate + acetyl-CoA = N-acetyl-alpha-D-glucosamine 1-phosphate + CoA + H(+). It catalyses the reaction N-acetyl-alpha-D-glucosamine 1-phosphate + UTP + H(+) = UDP-N-acetyl-alpha-D-glucosamine + diphosphate. It participates in nucleotide-sugar biosynthesis; UDP-N-acetyl-alpha-D-glucosamine biosynthesis; N-acetyl-alpha-D-glucosamine 1-phosphate from alpha-D-glucosamine 6-phosphate (route II): step 2/2. Its pathway is nucleotide-sugar biosynthesis; UDP-N-acetyl-alpha-D-glucosamine biosynthesis; UDP-N-acetyl-alpha-D-glucosamine from N-acetyl-alpha-D-glucosamine 1-phosphate: step 1/1. It functions in the pathway bacterial outer membrane biogenesis; LPS lipid A biosynthesis. Catalyzes the last two sequential reactions in the de novo biosynthetic pathway for UDP-N-acetylglucosamine (UDP-GlcNAc). The C-terminal domain catalyzes the transfer of acetyl group from acetyl coenzyme A to glucosamine-1-phosphate (GlcN-1-P) to produce N-acetylglucosamine-1-phosphate (GlcNAc-1-P), which is converted into UDP-GlcNAc by the transfer of uridine 5-monophosphate (from uridine 5-triphosphate), a reaction catalyzed by the N-terminal domain. The polypeptide is Bifunctional protein GlmU (Symbiobacterium thermophilum (strain DSM 24528 / JCM 14929 / IAM 14863 / T)).